The primary structure comprises 955 residues: 2-oxoglutarate dehydrogenase E1 component (955 aa).

It belongs to the alpha-ketoglutarate dehydrogenase family. As to quaternary structure, homodimer. Part of the 2-oxoglutarate dehydrogenase (OGDH) complex composed of E1 (2-oxoglutarate dehydrogenase), E2 (dihydrolipoamide succinyltransferase) and E3 (dihydrolipoamide dehydrogenase); the complex contains multiple copies of the three enzymatic components (E1, E2 and E3). It depends on thiamine diphosphate as a cofactor.

The enzyme catalyses N(6)-[(R)-lipoyl]-L-lysyl-[protein] + 2-oxoglutarate + H(+) = N(6)-[(R)-S(8)-succinyldihydrolipoyl]-L-lysyl-[protein] + CO2. E1 component of the 2-oxoglutarate dehydrogenase (OGDH) complex which catalyzes the decarboxylation of 2-oxoglutarate, the first step in the conversion of 2-oxoglutarate to succinyl-CoA and CO(2). The polypeptide is 2-oxoglutarate dehydrogenase E1 component (Bacillus cereus (strain ATCC 14579 / DSM 31 / CCUG 7414 / JCM 2152 / NBRC 15305 / NCIMB 9373 / NCTC 2599 / NRRL B-3711)).